The following is a 184-amino-acid chain: ATP synthase subunit b, chloroplastic (184 aa).

A helical transmembrane segment spans residues 31–53; that stretch reads LINLAVVIGVLVYFGKGVLTTIL.

This sequence belongs to the ATPase B chain family. In terms of assembly, F-type ATPases have 2 components, F(1) - the catalytic core - and F(0) - the membrane proton channel. F(1) has five subunits: alpha(3), beta(3), gamma(1), delta(1), epsilon(1). F(0) has four main subunits: a(1), b(1), b'(1) and c(10-14). The alpha and beta chains form an alternating ring which encloses part of the gamma chain. F(1) is attached to F(0) by a central stalk formed by the gamma and epsilon chains, while a peripheral stalk is formed by the delta, b and b' chains.

Its subcellular location is the plastid. It localises to the chloroplast thylakoid membrane. In terms of biological role, f(1)F(0) ATP synthase produces ATP from ADP in the presence of a proton or sodium gradient. F-type ATPases consist of two structural domains, F(1) containing the extramembraneous catalytic core and F(0) containing the membrane proton channel, linked together by a central stalk and a peripheral stalk. During catalysis, ATP synthesis in the catalytic domain of F(1) is coupled via a rotary mechanism of the central stalk subunits to proton translocation. Its function is as follows. Component of the F(0) channel, it forms part of the peripheral stalk, linking F(1) to F(0). In Staurastrum punctulatum (Green alga), this protein is ATP synthase subunit b, chloroplastic.